The following is a 195-amino-acid chain: dTTP/UTP pyrophosphatase (195 aa).

The Proton acceptor role is filled by Asp-73.

This sequence belongs to the Maf family. YhdE subfamily. It depends on a divalent metal cation as a cofactor.

It localises to the cytoplasm. It carries out the reaction dTTP + H2O = dTMP + diphosphate + H(+). The enzyme catalyses UTP + H2O = UMP + diphosphate + H(+). Functionally, nucleoside triphosphate pyrophosphatase that hydrolyzes dTTP and UTP. May have a dual role in cell division arrest and in preventing the incorporation of modified nucleotides into cellular nucleic acids. This is dTTP/UTP pyrophosphatase from Exiguobacterium sibiricum (strain DSM 17290 / CCUG 55495 / CIP 109462 / JCM 13490 / 255-15).